Consider the following 212-residue polypeptide: Placenta-specific protein 1 (212 aa).

Residues 1-22 (MKVFKFIGLMILLTSAFSAGSG) form the signal peptide.

The protein belongs to the PLAC1 family. In terms of tissue distribution, expressed in placenta. Localizes primarily to differentiated syncytiotrophoblast throughout gestation as well as to a small population of villous cytotrophoblasts. Also detected in maternal blood and rapidly disappears following delivery, but is not detected in other adult or fetal tissues examined.

Its subcellular location is the secreted. In terms of biological role, may play a role in placental development. In Homo sapiens (Human), this protein is Placenta-specific protein 1.